A 374-amino-acid polypeptide reads, in one-letter code: MDEDPEEGLLGWGETVFRDEHVFEIDYVPEVFRHRESQLQTLQYALRPAVRGSRPLNVVARGPPGTGKTTAVQKLFGELSGQPGVQTVRVNCQVDSTRYAVFSRVFEEIFDYEPPSSGISFKKLFGQVAERIADDDEVLVVALDDVNYLFYEDEAGDTLYSLLRAHETQPGAKVGVVVVSSDLELDVIEALDGRVQSVFRPEEAYFSAYDRAEITDILRDRVEVGFREGAVAEPVLDAVGGRTDEAGDLRVGIDVLRRAGLHAESRASKTVEMEDVDAVYEDAKHVHLSRTLAALSDNERALVRTVAEQEGDRAGDVYDVFNDRTDLGYTRYTEIVNKLDELGVIDAAYEQRSGRGRSRTLRLTHDSEAVLERL.

Residues 66–70 (TGKTT), Tyr209, and Arg221 each bind ATP.

This sequence belongs to the CDC6/cdc18 family.

Its function is as follows. Involved in regulation of DNA replication. The protein is ORC1-type DNA replication protein 6 (orc6) of Halobacterium salinarum (strain ATCC 700922 / JCM 11081 / NRC-1) (Halobacterium halobium).